Reading from the N-terminus, the 350-residue chain is Small ribosomal subunit biogenesis GTPase RsgA (350 aa).

The span at 1–17 shows a compositional bias: polar residues; the sequence is MSKNKLSKGQQRRVNAN. The disordered stretch occupies residues 1–33; it reads MSKNKLSKGQQRRVNANHQRRLKTSKEKPDYDD. One can recognise a CP-type G domain in the interval 104–273; sequence TSVLTRPDFY…VIDSPGVREF (170 aa). GTP-binding positions include 160-163 and 214-222; these read NKID and GQSGVGKSS. Positions 297, 302, 304, and 310 each coordinate Zn(2+).

This sequence belongs to the TRAFAC class YlqF/YawG GTPase family. RsgA subfamily. As to quaternary structure, monomer. Associates with 30S ribosomal subunit, binds 16S rRNA. Zn(2+) serves as cofactor.

The protein localises to the cytoplasm. One of several proteins that assist in the late maturation steps of the functional core of the 30S ribosomal subunit. Helps release RbfA from mature subunits. May play a role in the assembly of ribosomal proteins into the subunit. Circularly permuted GTPase that catalyzes slow GTP hydrolysis, GTPase activity is stimulated by the 30S ribosomal subunit. This is Small ribosomal subunit biogenesis GTPase RsgA from Shigella flexneri.